The sequence spans 201 residues: Small ribosomal subunit protein uS10m (201 aa).

It belongs to the universal ribosomal protein uS10 family. In terms of assembly, component of the mitochondrial small ribosomal subunit (mt-SSU). Mature mammalian 55S mitochondrial ribosomes consist of a small (28S) and a large (39S) subunit. The 28S small subunit contains a 12S ribosomal RNA (12S mt-rRNA) and 30 different proteins. The 39S large subunit contains a 16S rRNA (16S mt-rRNA), a copy of mitochondrial valine transfer RNA (mt-tRNA(Val)), which plays an integral structural role, and 52 different proteins.

The protein resides in the mitochondrion. The polypeptide is Small ribosomal subunit protein uS10m (MRPS10) (Homo sapiens (Human)).